A 209-amino-acid polypeptide reads, in one-letter code: Small ribosomal subunit protein uS4 (209 aa).

Residues 98 to 164 enclose the S4 RNA-binding domain; that stretch reads RRLDNVVYRL…LPVKNAIELN (67 aa).

This sequence belongs to the universal ribosomal protein uS4 family. As to quaternary structure, part of the 30S ribosomal subunit. Contacts protein S5. The interaction surface between S4 and S5 is involved in control of translational fidelity.

Functionally, one of the primary rRNA binding proteins, it binds directly to 16S rRNA where it nucleates assembly of the body of the 30S subunit. Its function is as follows. With S5 and S12 plays an important role in translational accuracy. The protein is Small ribosomal subunit protein uS4 of Thermosipho africanus (strain TCF52B).